The chain runs to 605 residues: Elongation factor 4 (605 aa).

The region spanning 9 to 192 (GMIRNFCIIA…AIVQRIPAPA (184 aa)) is the tr-type G domain. Residues 21–26 (DHGKST) and 139–142 (NKID) each bind GTP.

Belongs to the TRAFAC class translation factor GTPase superfamily. Classic translation factor GTPase family. LepA subfamily.

The protein resides in the cell inner membrane. The catalysed reaction is GTP + H2O = GDP + phosphate + H(+). Functionally, required for accurate and efficient protein synthesis under certain stress conditions. May act as a fidelity factor of the translation reaction, by catalyzing a one-codon backward translocation of tRNAs on improperly translocated ribosomes. Back-translocation proceeds from a post-translocation (POST) complex to a pre-translocation (PRE) complex, thus giving elongation factor G a second chance to translocate the tRNAs correctly. Binds to ribosomes in a GTP-dependent manner. The sequence is that of Elongation factor 4 from Chlorobaculum parvum (strain DSM 263 / NCIMB 8327) (Chlorobium vibrioforme subsp. thiosulfatophilum).